The following is a 297-amino-acid chain: Transmembrane protein 169 (297 aa).

Residues 1-85 (MEEPTAVEGQ…KEEEGDDFLD (85 aa)) form a disordered region. Topologically, residues 1–159 (MEEPTAVEGQ…CQMGADRGPH (159 aa)) are extracellular. Acidic residues predominate over residues 61–85 (KTDEEPGESEGGDQPKEEEGDDFLD). A helical transmembrane segment spans residues 160-180 (VVLWTLICLPVVFILSFVVSF). Residues 181 to 210 (YYGTITWYNIFLVYNEERTFWHKISYCPCL) lie on the Cytoplasmic side of the membrane. The helical transmembrane segment at 211–231 (VLFYPVLIMAMASSLGLYAAV) threads the bilayer. Residues 232–297 (VQLSWSWEAW…PIQEVETSTV (66 aa)) lie on the Extracellular side of the membrane.

It localises to the membrane. This Homo sapiens (Human) protein is Transmembrane protein 169 (TMEM169).